The sequence spans 106 residues: PAT complex subunit Asterix (106 aa).

Residues 1-29 (MSTNNMSDPRRPNKVLRYKPPPSECNPAL) are disordered. S2 is subject to N-acetylserine. The Cytoplasmic portion of the chain corresponds to 2-32 (STNNMSDPRRPNKVLRYKPPPSECNPALDDP). The helical transmembrane segment at 33–51 (TPDYMNLLGMIFSMCGLML) threads the bilayer. Position 52 (K52) is a topological domain, lumenal. Residues 53-70 (LKWCAWVAVYCSFISFAN) traverse the membrane as a helical segment. Over 71 to 74 (SRSS) the chain is Cytoplasmic. The helical transmembrane segment at 75–95 (EDTKQMMSSFMLSISAVVMSY) threads the bilayer. Topologically, residues 96-106 (LQNPQPMTPPW) are lumenal.

It belongs to the Asterix family. Component of the PAT complex, composed of WDR83OS/Asterix and CCDC47. The PAT complex is part of the multi-pass translocon (MPT) complex, composed of three subcomplexes, the GEL complex (composed of RAB5IF/OPTI and TMCO1), the BOS complex (composed of NCLN/Nicalin, NOMO1 and TMEM147) and the PAT complex (composed of WDR83OS/Asterix and CCDC47). The MPT complex associates with the SEC61 complex.

Its subcellular location is the endoplasmic reticulum membrane. Its function is as follows. Component of the multi-pass translocon (MPT) complex that mediates insertion of multi-pass membrane proteins into the lipid bilayer of membranes. The MPT complex takes over after the SEC61 complex: following membrane insertion of the first few transmembrane segments of proteins by the SEC61 complex, the MPT complex occludes the lateral gate of the SEC61 complex to promote insertion of subsequent transmembrane regions. Within the MPT complex, the PAT subcomplex sequesters any highly polar regions in the transmembrane domains away from the non-polar membrane environment until they can be buried in the interior of the fully assembled protein. Within the PAT subcomplex, WDR83OS/Asterix binds to and redirects the substrate to a location behind the SEC61 complex. The sequence is that of PAT complex subunit Asterix (WDR83OS) from Canis lupus familiaris (Dog).